The sequence spans 397 residues: Pectate lyase 4 (397 aa).

The signal sequence occupies residues 1–25; sequence MGIKHCCYILYFTLALVTLVQAGRL. A glycan (N-linked (GlcNAc...) asparagine) is linked at Asn-36. The cysteines at positions 54 and 71 are disulfide-linked. 3 PbH1 repeats span residues 159–202, 203–224, and 227–248; these read VKNV…HVTG, SSDIWIDHCTLSKSFDGLVDVN, and STGVTISNCKFTHHEKAVLLGA. Ca(2+) is bound by residues Asp-194, Asp-218, and Asp-222. Arg-274 is a catalytic residue.

It belongs to the polysaccharide lyase 1 family. Amb a subfamily. Monomer. Ca(2+) is required as a cofactor. The N-terminus is blocked. As to expression, pollen and flowers.

The catalysed reaction is Eliminative cleavage of (1-&gt;4)-alpha-D-galacturonan to give oligosaccharides with 4-deoxy-alpha-D-galact-4-enuronosyl groups at their non-reducing ends.. It participates in glycan metabolism; pectin degradation; 2-dehydro-3-deoxy-D-gluconate from pectin: step 2/5. Functionally, has pectate lyase activity. This Ambrosia artemisiifolia (Common ragweed) protein is Pectate lyase 4.